A 63-amino-acid chain; its full sequence is Large ribosomal subunit protein bL28 (63 aa).

It belongs to the bacterial ribosomal protein bL28 family.

The sequence is that of Large ribosomal subunit protein bL28 from Citrifermentans bemidjiense (strain ATCC BAA-1014 / DSM 16622 / JCM 12645 / Bem) (Geobacter bemidjiensis).